A 46-amino-acid chain; its full sequence is Esculentin-1a/b (46 aa).

A disulfide bridge links cysteine 40 with cysteine 46.

This sequence belongs to the frog skin active peptide (FSAP) family. Esculentin subfamily. Expressed by the skin glands.

It localises to the secreted. Antimicrobial peptide. Stimulates insulin secretion by BRIN-BD11 cells in vitro. Shows hemolytic activity. The sequence is that of Esculentin-1a/b from Pelophylax ridibundus (Marsh frog).